The primary structure comprises 426 residues: Histidine--tRNA ligase (426 aa).

This sequence belongs to the class-II aminoacyl-tRNA synthetase family. Homodimer.

It is found in the cytoplasm. The catalysed reaction is tRNA(His) + L-histidine + ATP = L-histidyl-tRNA(His) + AMP + diphosphate + H(+). The chain is Histidine--tRNA ligase (hisS) from Streptococcus dysgalactiae subsp. equisimilis (Streptococcus equisimilis).